A 393-amino-acid polypeptide reads, in one-letter code: Methylthioribose kinase (393 aa).

Residues N38, K53, and 107–109 (EDL) contribute to the ATP site. D225 contributes to the substrate binding site. 242–244 (DPE) contacts ATP. Residue R332 coordinates substrate.

It belongs to the methylthioribose kinase family. Homodimer.

The catalysed reaction is 5-(methylsulfanyl)-D-ribose + ATP = 5-(methylsulfanyl)-alpha-D-ribose 1-phosphate + ADP + H(+). It functions in the pathway amino-acid biosynthesis; L-methionine biosynthesis via salvage pathway; S-methyl-5-thio-alpha-D-ribose 1-phosphate from S-methyl-5'-thioadenosine (hydrolase route): step 2/2. Catalyzes the phosphorylation of methylthioribose into methylthioribose-1-phosphate. In Bacillus cereus (strain ATCC 14579 / DSM 31 / CCUG 7414 / JCM 2152 / NBRC 15305 / NCIMB 9373 / NCTC 2599 / NRRL B-3711), this protein is Methylthioribose kinase.